The sequence spans 490 residues: UDP-N-acetylmuramate--L-alanine ligase (490 aa).

126–132 (GTHGKTT) is an ATP binding site.

This sequence belongs to the MurCDEF family.

The protein resides in the cytoplasm. It catalyses the reaction UDP-N-acetyl-alpha-D-muramate + L-alanine + ATP = UDP-N-acetyl-alpha-D-muramoyl-L-alanine + ADP + phosphate + H(+). It participates in cell wall biogenesis; peptidoglycan biosynthesis. Its function is as follows. Cell wall formation. The protein is UDP-N-acetylmuramate--L-alanine ligase of Sodalis glossinidius (strain morsitans).